A 120-amino-acid polypeptide reads, in one-letter code: Small ribosomal subunit protein uS13 (120 aa).

Residues 94-120 (GLPLRGQRTRTNARTRKGPRKAIAGKK) form a disordered region.

It belongs to the universal ribosomal protein uS13 family. As to quaternary structure, part of the 30S ribosomal subunit. Forms a loose heterodimer with protein S19. Forms two bridges to the 50S subunit in the 70S ribosome.

Located at the top of the head of the 30S subunit, it contacts several helices of the 16S rRNA. In the 70S ribosome it contacts the 23S rRNA (bridge B1a) and protein L5 of the 50S subunit (bridge B1b), connecting the 2 subunits; these bridges are implicated in subunit movement. Contacts the tRNAs in the A and P-sites. This chain is Small ribosomal subunit protein uS13, found in Azoarcus sp. (strain BH72).